Consider the following 126-residue polypeptide: Small ribosomal subunit protein uS12 (126 aa).

At D89 the chain carries 3-methylthioaspartic acid.

Belongs to the universal ribosomal protein uS12 family. In terms of assembly, part of the 30S ribosomal subunit. Contacts proteins S8 and S17. May interact with IF1 in the 30S initiation complex.

With S4 and S5 plays an important role in translational accuracy. Its function is as follows. Interacts with and stabilizes bases of the 16S rRNA that are involved in tRNA selection in the A site and with the mRNA backbone. Located at the interface of the 30S and 50S subunits, it traverses the body of the 30S subunit contacting proteins on the other side and probably holding the rRNA structure together. The combined cluster of proteins S8, S12 and S17 appears to hold together the shoulder and platform of the 30S subunit. In Sulfurimonas denitrificans (strain ATCC 33889 / DSM 1251) (Thiomicrospira denitrificans (strain ATCC 33889 / DSM 1251)), this protein is Small ribosomal subunit protein uS12.